Reading from the N-terminus, the 223-residue chain is Deoxyribose-phosphate aldolase 1 (223 aa).

The active-site Proton donor/acceptor is the Asp91. Lys153 serves as the catalytic Schiff-base intermediate with acetaldehyde. Catalysis depends on Lys182, which acts as the Proton donor/acceptor.

It belongs to the DeoC/FbaB aldolase family. DeoC type 1 subfamily.

It is found in the cytoplasm. It catalyses the reaction 2-deoxy-D-ribose 5-phosphate = D-glyceraldehyde 3-phosphate + acetaldehyde. It participates in carbohydrate degradation; 2-deoxy-D-ribose 1-phosphate degradation; D-glyceraldehyde 3-phosphate and acetaldehyde from 2-deoxy-alpha-D-ribose 1-phosphate: step 2/2. In terms of biological role, catalyzes a reversible aldol reaction between acetaldehyde and D-glyceraldehyde 3-phosphate to generate 2-deoxy-D-ribose 5-phosphate. The polypeptide is Deoxyribose-phosphate aldolase 1 (Yersinia pestis).